The chain runs to 123 residues: Small ribosomal subunit protein uS12c (123 aa).

It belongs to the universal ribosomal protein uS12 family. Part of the 30S ribosomal subunit.

The protein localises to the plastid. Its subcellular location is the chloroplast. Its function is as follows. With S4 and S5 plays an important role in translational accuracy. Located at the interface of the 30S and 50S subunits. This chain is Small ribosomal subunit protein uS12c (rps12), found in Chara vulgaris (Common stonewort).